The primary structure comprises 395 residues: Putative gustatory receptor 58a (395 aa).

At 1–32 (MLLKFMYIYGIGCGLMPAPLKKGQFLLGYKQR) the chain is on the cytoplasmic side. A helical membrane pass occupies residues 33-53 (WYLIYTACLHGGLLTVLPFTF). Over 54-72 (PHYMYDDSYMSSNPVLKWT) the chain is Extracellular. Residues 73-93 (FNLTNITRIMAMFSGVLLMWF) form a helical membrane-spanning segment. At 94–131 (RRKRILNLGENLILHCLKCKTLDNRSKKYSKLRKRVRN) the chain is on the cytoplasmic side. The chain crosses the membrane as a helical span at residues 132–152 (VLFQMLLVANLSILLGALILF). Residues 153 to 169 (RIHSVQRISKTAMIVAH) are Extracellular-facing. Residues 170–190 (ITQFIYVVFMMTGICVILLVL) traverse the membrane as a helical segment. At 191 to 250 (HWQSERLQIALKDLCSFLNHEERNSLTLSENKANRSLGKLAKLFKLFAENQRLVREVFRT) the chain is on the cytoplasmic side. Residues 251 to 271 (FDLPIALLLLKMFVTNVNLVY) traverse the membrane as a helical segment. Residues 272 to 288 (HGVQFGNDTIETSSYTR) lie on the Extracellular side of the membrane. N-linked (GlcNAc...) asparagine glycosylation is present at Asn-278. The helical transmembrane segment at 289-309 (IVGQWVVISHYWSAVLLMNVV) threads the bilayer. At 310–366 (DDVTRRSDLKMGDLLREFSHLELVKRDFHLQLELFSDHLRCHPSTYKVCGLFIFNKQ) the chain is on the cytoplasmic side. Residues 367–387 (TSLAYFFYVLVQVLVLVQFDL) form a helical membrane-spanning segment. Topologically, residues 388–395 (KNKVEKRN) are extracellular.

The protein belongs to the insect chemoreceptor superfamily. Gustatory receptor (GR) family. Gr22e subfamily. As to expression, expressed in the adult labellar chemosensory neurons.

Its subcellular location is the cell membrane. Functionally, probable gustatory receptor which mediates acceptance or avoidance behavior, depending on its substrates. This Drosophila melanogaster (Fruit fly) protein is Putative gustatory receptor 58a (Gr58a).